A 370-amino-acid chain; its full sequence is Protein SUPPRESSOR OF NIM1 1 (370 aa).

Residues M1 to H43 form the F-box domain.

As to expression, ubiquitous, at low levels.

Its function is as follows. Negatively regulates a plant defense signaling pathway which is independent of salicylic acid (SA) and systemic acquired resistance (SAR). Confers sensitivity to P.syringae and P.parasitica. In Arabidopsis thaliana (Mouse-ear cress), this protein is Protein SUPPRESSOR OF NIM1 1 (SON1).